The primary structure comprises 297 residues: Dehydrodolichyl diphosphate synthase complex subunit Nus1 (297 aa).

The next 2 helical transmembrane spans lie at 7–26 (LVWR…TSWL) and 40–56 (CCRA…GFTL). Residues 63 to 73 (GRNRRHHRHPH) are compositionally biased toward basic residues. A disordered region spans residues 63 to 86 (GRNRRHHRHPHGGPGPGPGPAATH). A helical membrane pass occupies residues 121-139 (IASLVVWCMAVGISYISVY). 2 N-linked (GlcNAc...) asparagine glycosylation sites follow: N148 and N275. Residues 294–296 (RLG) carry the RXG motif; crucial for prenyltransferase activity motif. Residues L295 and G296 each contribute to the isopentenyl diphosphate site.

The protein belongs to the UPP synthase family. The active dehydrodolichyl diphosphate synthase complex is a heterotetramer composed of a dimer of heterodimer of DHDDS and NUS1. Interacts with NPC2. The cofactor is Mg(2+). As to expression, highly expressed in heart, liver, kidney and pancreas.

It is found in the endoplasmic reticulum membrane. It carries out the reaction n isopentenyl diphosphate + (2E,6E)-farnesyl diphosphate = a di-trans,poly-cis-polyprenyl diphosphate + n diphosphate. It functions in the pathway protein modification; protein glycosylation. It participates in lipid metabolism. Functionally, with DHDDS, forms the dehydrodolichyl diphosphate synthase (DDS) complex, an essential component of the dolichol monophosphate (Dol-P) biosynthetic machinery. Both subunits contribute to enzymatic activity, i.e. condensation of multiple copies of isopentenyl pyrophosphate (IPP) to farnesyl pyrophosphate (FPP) to produce dehydrodolichyl diphosphate (Dedol-PP), a precursor of dolichol phosphate which is utilized as a sugar carrier in protein glycosylation in the endoplasmic reticulum (ER). Synthesizes long-chain polyprenols, mostly of C95 and C100 chain length. Regulates the glycosylation and stability of nascent NPC2, thereby promoting trafficking of LDL-derived cholesterol. Acts as a specific receptor for the N-terminus of Nogo-B, a neural and cardiovascular regulator. The protein is Dehydrodolichyl diphosphate synthase complex subunit Nus1 of Mus musculus (Mouse).